The primary structure comprises 1008 residues: Kinesin-like protein KIN-5C (1008 aa).

The Kinesin motor domain occupies 12–359; that stretch reads NVQVLLRCRP…LDYAHRAKSI (348 aa). Residue 98–105 participates in ATP binding; the sequence is GQTGTGKT. Residues 402-459 are a coiled coil; the sequence is KDRYQQEENERKAMADQIEQMTTSLEANQKQINDLQEKYDSELQHSADLSKKLEATEK. 3 disordered regions span residues 910 to 931, 943 to 962, and 975 to 1008; these read VEAH…TAGI, YKDY…EVPS, and ESLM…TINN. The segment covering 913 to 925 has biased composition (basic and acidic residues); that stretch reads HLGESQHLQESHS. Residues 979–995 are compositionally biased toward basic and acidic residues; it reads DEFRENHPYEPSKDRRP.

This sequence belongs to the TRAFAC class myosin-kinesin ATPase superfamily. Kinesin family. KIN-5/BimC subfamily.

It localises to the cytoplasm. The protein localises to the cytoskeleton. Its subcellular location is the spindle. Its function is as follows. Responsible for microtubule translocation. May be important for the organization of phragmoplast-specific arrays of microtubules. Plays an essential role in stabilizing the mitotic spindle. Required during mitotic cytokinesis. The sequence is that of Kinesin-like protein KIN-5C from Oryza sativa subsp. japonica (Rice).